Here is a 132-residue protein sequence, read N- to C-terminus: Fatty acid-binding protein 1 (132 aa).

A fatty acid is bound by residues Arg-106 and Arg-128–Tyr-130.

This sequence belongs to the calycin superfamily. Fatty-acid binding protein (FABP) family. Monomer. Midgut.

The protein resides in the cytoplasm. Its function is as follows. Binds fatty acids in a 1:1 molar ratio. This Manduca sexta (Tobacco hawkmoth) protein is Fatty acid-binding protein 1 (MFB1).